The primary structure comprises 160 residues: MPTFDVVSEVDKHELQNAIDQVNREIGTRFDFRGTEAHIEKSEEELILVAESEFQLQQMRTILDTKLAKRGVDVDCLEAKEPEIIGKRARQSIQVRQGIDKDTARKIIKIIKESKLKVQAAIQGEQVRISGKKRDDLQQVIALLREADLDLPLQYINFRD.

It belongs to the YajQ family.

Nucleotide-binding protein. The protein is Nucleotide-binding protein Noc_2254 of Nitrosococcus oceani (strain ATCC 19707 / BCRC 17464 / JCM 30415 / NCIMB 11848 / C-107).